Reading from the N-terminus, the 509-residue chain is Coiled-coil domain-containing protein 181 (509 aa).

The span at 60–82 shows a compositional bias: basic and acidic residues; the sequence is EHTKQHSDPDKSLQDDVSPRRND. 2 disordered regions span residues 60–121 and 285–367; these read EHTK…EEDE and GEPL…EEKE. Over residues 320–334 the composition is skewed to polar residues; it reads RTQSARISPVTSTYC. The stretch at 335–375 forms a coiled coil; that stretch reads LSPRQKELQKQLEQKREKLKREEEQRKIEEEKEKKRENDIV. A compositionally biased stretch (basic and acidic residues) spans 338-367; it reads RQKELQKQLEQKREKLKREEEQRKIEEEKE.

The protein belongs to the CCDC181 family. As to quaternary structure, homodimer. Interacts with HOOK1. Interacts with HOOK2. Interacts with HOOK3.

It is found in the cytoplasm. Its subcellular location is the cytoskeleton. The protein resides in the cell projection. It localises to the cilium. The protein localises to the flagellum. Functionally, microtubule-binding protein that localizes to the microtubular manchette of elongating spermatids. The chain is Coiled-coil domain-containing protein 181 from Macaca fascicularis (Crab-eating macaque).